The chain runs to 710 residues: Elongation factor G (710 aa).

The tr-type G domain maps to serine 8–methionine 290. GTP-binding positions include alanine 17–threonine 24, aspartate 88–histidine 92, and asparagine 142–aspartate 145.

Belongs to the TRAFAC class translation factor GTPase superfamily. Classic translation factor GTPase family. EF-G/EF-2 subfamily.

The protein resides in the cytoplasm. Functionally, catalyzes the GTP-dependent ribosomal translocation step during translation elongation. During this step, the ribosome changes from the pre-translocational (PRE) to the post-translocational (POST) state as the newly formed A-site-bound peptidyl-tRNA and P-site-bound deacylated tRNA move to the P and E sites, respectively. Catalyzes the coordinated movement of the two tRNA molecules, the mRNA and conformational changes in the ribosome. The protein is Elongation factor G of Buchnera aphidicola subsp. Baizongia pistaciae (strain Bp).